The primary structure comprises 605 residues: Arginyl-tRNA--protein transferase 2 (605 aa).

Residues Lys496–Ser513 show a composition bias toward low complexity. Residues Lys496–Arg549 are disordered. Acidic residues predominate over residues Glu518–Ser541.

Belongs to the R-transferase family.

It catalyses the reaction an N-terminal L-alpha-aminoacyl-[protein] + L-arginyl-tRNA(Arg) = an N-terminal L-arginyl-L-aminoacyl-[protein] + tRNA(Arg) + H(+). Its function is as follows. Involved in the post-translational conjugation of arginine to the N-terminal aspartate or glutamate of a protein. This arginylation is required for degradation of the protein via the ubiquitin pathway. Component of the N-end rule pathway with ATE1 and PRT6. The N-end rule pathway regulates seed after-ripening, seedling sugar sensitivity, seedling lipid breakdown, and abscisic acid (ABA) sensitivity of germination. The end-rule pathway regulates various aspects of leaf and shoot development. Involved in the oxygen-dependent N-arginylation of RAP2-12, an activator of hypoxic gene expression. This N-terminal modification leads to ubiquitination by PRT6 and subsequent degradation of RAP2-12 under aerobic conditions. Involved in disease resistance. The end-rule pathway plays a role in regulating the timing and amplitude of the immune response following infection with the bacterial pathogen Pseudomonas syringae pv tomato. Regulates the biosynthesis of plant-defense metabolites such as glucosinolates, and the biosynthesis and response to the phytohormone jasmonate (JA), which plays a key role in plant immunity. The protein is Arginyl-tRNA--protein transferase 2 of Arabidopsis thaliana (Mouse-ear cress).